The sequence spans 485 residues: Glutamyl-tRNA(Gln) amidotransferase subunit A (485 aa).

Catalysis depends on charge relay system residues Lys-78 and Ser-153. The Acyl-ester intermediate role is filled by Ser-177.

It belongs to the amidase family. GatA subfamily. Heterotrimer of A, B and C subunits.

The catalysed reaction is L-glutamyl-tRNA(Gln) + L-glutamine + ATP + H2O = L-glutaminyl-tRNA(Gln) + L-glutamate + ADP + phosphate + H(+). Allows the formation of correctly charged Gln-tRNA(Gln) through the transamidation of misacylated Glu-tRNA(Gln) in organisms which lack glutaminyl-tRNA synthetase. The reaction takes place in the presence of glutamine and ATP through an activated gamma-phospho-Glu-tRNA(Gln). In Bacillus anthracis (strain A0248), this protein is Glutamyl-tRNA(Gln) amidotransferase subunit A.